Consider the following 83-residue polypeptide: uncharacterized protein (83 aa).

It belongs to the chlamydial CPn_0711/CT_665/TC_0036 family.

This is an uncharacterized protein from Chlamydia trachomatis serovar D (strain ATCC VR-885 / DSM 19411 / UW-3/Cx).